A 241-amino-acid polypeptide reads, in one-letter code: 1-(5-phosphoribosyl)-5-[(5-phosphoribosylamino)methylideneamino] imidazole-4-carboxamide isomerase (241 aa).

The active-site Proton acceptor is Asp-8. Asp-129 (proton donor) is an active-site residue.

The protein belongs to the HisA/HisF family.

It localises to the cytoplasm. It catalyses the reaction 1-(5-phospho-beta-D-ribosyl)-5-[(5-phospho-beta-D-ribosylamino)methylideneamino]imidazole-4-carboxamide = 5-[(5-phospho-1-deoxy-D-ribulos-1-ylimino)methylamino]-1-(5-phospho-beta-D-ribosyl)imidazole-4-carboxamide. The protein operates within amino-acid biosynthesis; L-histidine biosynthesis; L-histidine from 5-phospho-alpha-D-ribose 1-diphosphate: step 4/9. The protein is 1-(5-phosphoribosyl)-5-[(5-phosphoribosylamino)methylideneamino] imidazole-4-carboxamide isomerase of Caulobacter sp. (strain K31).